Reading from the N-terminus, the 256-residue chain is 6-phosphogluconolactonase (256 aa).

Belongs to the glucosamine/galactosamine-6-phosphate isomerase family. 6-phosphogluconolactonase subfamily.

It catalyses the reaction 6-phospho-D-glucono-1,5-lactone + H2O = 6-phospho-D-gluconate + H(+). The protein operates within carbohydrate degradation; pentose phosphate pathway; D-ribulose 5-phosphate from D-glucose 6-phosphate (oxidative stage): step 2/3. Its function is as follows. Hydrolysis of 6-phosphogluconolactone to 6-phosphogluconate. This is 6-phosphogluconolactonase (pgl) from Chlamydia trachomatis serovar D (strain ATCC VR-885 / DSM 19411 / UW-3/Cx).